We begin with the raw amino-acid sequence, 666 residues long: Nuclear distribution protein nudE homolog 1 (666 aa).

A coiled-coil region spans residues 14 to 195 (EEEIAHYREK…KDQLARAIAT (182 aa)). Disordered stretches follow at residues 40-64 (EFQQSSKELEDEMEQELAANDKQQA), 220-310 (DDIN…SGIP), 369-388 (KRVTSTTSTTSSTTTAPAPH), and 397-666 (DHNT…KVKK). Polar residues predominate over residues 251-274 (RSGTMSSIPVASPSTKRFSQQIPH). Low complexity-rich tracts occupy residues 275–287 (SPSFSTLSRSTTS) and 372–383 (TSTTSTTSSTTT). The segment covering 400–410 (TTPTAQSQQFP) has biased composition (polar residues). Low complexity-rich tracts occupy residues 449 to 465 (PTFRSSSTTSNRSLPSR), 473 to 485 (ASGSARSTTSGTA), and 536 to 554 (SATPTSGFSSFSASASTSN). 2 stretches are compositionally biased toward polar residues: residues 587–599 (RQSLSGAGPTPTT) and 614–638 (SSLSNMDKPSLMSASSGSRTPSGRP).

This sequence belongs to the nudE family. As to quaternary structure, self-associates. Interacts with PAC1.

It is found in the cytoplasm. It localises to the cytoskeleton. Functionally, required for nuclear migration. The sequence is that of Nuclear distribution protein nudE homolog 1 (NDE1) from Cryptococcus neoformans var. neoformans serotype D (strain JEC21 / ATCC MYA-565) (Filobasidiella neoformans).